Here is a 186-residue protein sequence, read N- to C-terminus: Mitoferrin-2B (186 aa).

The stretch at 75–163 (SNVTAHMLAG…FACYEKLKKT (89 aa)) is one Solcar repeat. 3 consecutive transmembrane segments (helical) span residues 77 to 96 (VTAH…CLMY), 137 to 157 (RGLN…FACY), and 172 to 185 (GNCH…NSCP).

This sequence belongs to the mitochondrial carrier (TC 2.A.29) family.

The protein resides in the mitochondrion inner membrane. It catalyses the reaction Fe(2+)(in) = Fe(2+)(out). Its function is as follows. Mitochondrial iron transporter that mediates iron uptake. Probably required for heme synthesis of hemoproteins and Fe-S cluster assembly in non-erythroid cells. The sequence is that of Mitoferrin-2B (slc25a28-b) from Xenopus laevis (African clawed frog).